Here is a 499-residue protein sequence, read N- to C-terminus: Serine/threonine-protein phosphatase 5 (499 aa).

Positions 1–23 (MAMAEGERTECAEPPRDEPPADG) are disordered. An N-acetylalanine modification is found at Ala-2. TPR repeat units follow at residues 28–61 (AEEL…NPSN), 62–95 (AIYY…DKKY), and 96–129 (IKGY…KPHD). The segment at 184–499 (GKVTISFMKE…ANTLLQLGMM (316 aa)) is catalytic. Positions 242, 244, and 271 each coordinate Mn(2+). Position 244 (His-244) interacts with substrate. Residues Arg-275 and 303–304 (NH) each bind substrate. Asn-303 is a Mn(2+) binding site. His-304 functions as the Proton donor/acceptor in the catalytic mechanism. A Mn(2+)-binding site is contributed by His-352. Substrate is bound by residues Arg-400 and His-427. His-427 is a Mn(2+) binding site. The required for autoinhibition stretch occupies residues 495–499 (QLGMM).

It belongs to the PPP phosphatase family. PP-5 (PP-T) subfamily. As to quaternary structure, probably forms a complex composed of chaperones HSP90 and HSP70, co-chaperones STIP1/HOP, CDC37, PPP5C, PTGES3/p23, TSC1 and client protein TSC2. Probably forms a complex composed of chaperones HSP90 and HSP70, co-chaperones CDC37, PPP5C, TSC1 and client protein TSC2, CDK4, AKT, RAF1 and NR3C1; this complex does not contain co-chaperones STIP1/HOP and PTGES3/p23. Part of a complex with HSP90/HSP90AA1 and steroid receptors. Interacts (via TPR repeats) with HSP90AA1 (via TPR repeat-binding motif) or HSPA1A/HSPA1B; the interaction is direct and activates the phosphatase activity. Dissociates from HSPA1A/HSPA1B and HSP90AA1 in response to arachidonic acid. Interacts with CPNE1 (via VWFA domain). Interacts with CDC16, CDC27. Interacts with KLHDC10 (via the 6 Kelch repeats); inhibits the phosphatase activity on MAP3K5. Interacts with ATM and ATR; both interactions are induced by DNA damage and enhance ATM and ATR kinase activity. Interacts with RAD17; reduced by DNA damage. Interacts with nuclear receptors such as NR3C1/GCR and PPARG (activated by agonist); regulates their transactivation activities. Interacts (via TPR repeats) with S100 proteins S100A1, S100A2, S100A6, S100B and S100P; the interactions are calcium-dependent, strongly activate PPP5C phosphatase activity and compete with HSP90AA1 and MAP3K5 interactions. Interacts with SMAD2 and SMAD3 but not with SMAD1; decreases SMAD3 phosphorylation and protein levels. Interacts (via TPR repeats) with CRY1 and CRY2; the interaction with CRY2 down-regulates the phosphatase activity on CSNK1E. Interacts (via TPR repeats) with the active form of RAC1, GNA12 or GNA13; these interactions activate the phosphatase activity and translocate PPP5C to the cell membrane. Interacts with FLCN. The cofactor is Mg(2+). Requires Mn(2+) as cofactor. Post-translationally, activated by at least two different proteolytic cleavages producing a 56 kDa and a 50 kDa form. In terms of tissue distribution, ubiquitous.

It localises to the nucleus. Its subcellular location is the cytoplasm. The protein localises to the cell membrane. It carries out the reaction O-phospho-L-seryl-[protein] + H2O = L-seryl-[protein] + phosphate. It catalyses the reaction O-phospho-L-threonyl-[protein] + H2O = L-threonyl-[protein] + phosphate. Its activity is regulated as follows. Autoinhibited. In the autoinhibited state, the TPR domain interacts with the catalytic region and prevents substrate access to the catalytic pocket. Allosterically activated by various polyunsaturated fatty acids, free long-chain fatty-acids and long-chain fatty acyl-CoA esters, arachidonic acid being the most effective activator. HSP90A and probably RAC1, GNA12 and GNA13 can also release the autoinhibition by the TPR repeat. Activation by RAC1, GNA12 and GNA13 is synergistic with the one produced by fatty acids binding. Inhibited by okadaic acid. Its function is as follows. Serine/threonine-protein phosphatase that dephosphorylates a myriad of proteins involved in different signaling pathways including the kinases CSNK1E, ASK1/MAP3K5, PRKDC and RAF1, the nuclear receptors NR3C1, PPARG, ESR1 and ESR2, SMAD proteins and TAU/MAPT. Implicated in wide ranging cellular processes, including apoptosis, differentiation, DNA damage response, cell survival, regulation of ion channels or circadian rhythms, in response to steroid and thyroid hormones, calcium, fatty acids, TGF-beta as well as oxidative and genotoxic stresses. Participates in the control of DNA damage response mechanisms such as checkpoint activation and DNA damage repair through, for instance, the regulation ATM/ATR-signaling and dephosphorylation of PRKDC and TP53BP1. Inhibits ASK1/MAP3K5-mediated apoptosis induced by oxidative stress. Plays a positive role in adipogenesis, mainly through the dephosphorylation and activation of PPARG transactivation function. Also dephosphorylates and inhibits the anti-adipogenic effect of NR3C1. Regulates the circadian rhythms, through the dephosphorylation and activation of CSNK1E. May modulate TGF-beta signaling pathway by the regulation of SMAD3 phosphorylation and protein expression levels. Dephosphorylates and may play a role in the regulation of TAU/MAPT. Through their dephosphorylation, may play a role in the regulation of ions channels such as KCNH2. Dephosphorylate FNIP1, disrupting interaction with HSP90AA1/Hsp90. In Homo sapiens (Human), this protein is Serine/threonine-protein phosphatase 5 (PPP5C).